A 334-amino-acid chain; its full sequence is Glyceraldehyde-3-phosphate dehydrogenase (334 aa).

NAD(+) contacts are provided by residues 12 to 13 (TI) and Gly-111. 140–142 (SCN) provides a ligand contact to D-glyceraldehyde 3-phosphate. Cys-141 serves as the catalytic Nucleophile. Position 167 (Arg-167) interacts with NAD(+). A D-glyceraldehyde 3-phosphate-binding site is contributed by 192 to 193 (HG). Gln-298 provides a ligand contact to NAD(+).

It belongs to the glyceraldehyde-3-phosphate dehydrogenase family. In terms of assembly, homotetramer.

It is found in the cytoplasm. The enzyme catalyses D-glyceraldehyde 3-phosphate + phosphate + NADP(+) = (2R)-3-phospho-glyceroyl phosphate + NADPH + H(+). It catalyses the reaction D-glyceraldehyde 3-phosphate + phosphate + NAD(+) = (2R)-3-phospho-glyceroyl phosphate + NADH + H(+). It participates in carbohydrate degradation; glycolysis; pyruvate from D-glyceraldehyde 3-phosphate: step 1/5. The sequence is that of Glyceraldehyde-3-phosphate dehydrogenase (gap) from Pyrococcus abyssi (strain GE5 / Orsay).